The chain runs to 332 residues: tRNA (cytosine(38)-C(5))-methyltransferase (332 aa).

The 330-residue stretch at 3-332 folds into the SAM-dependent MTase C5-type domain; it reads HKILELYSGI…ISELLKILFE (330 aa). S-adenosyl-L-homocysteine-binding positions include 12-14, 33-34, 55-56, and Ser-75; these read IGG, DI, and NI. Residue Cys-78 is part of the active site. S-adenosyl-L-homocysteine is bound by residues Gln-79, Ser-97, and 316–317; that span reads NS.

The protein belongs to the class I-like SAM-binding methyltransferase superfamily. C5-methyltransferase family.

It is found in the cytoplasm. Its subcellular location is the nucleus. It carries out the reaction cytidine(38) in tRNA + S-adenosyl-L-methionine = 5-methylcytidine(38) in tRNA + S-adenosyl-L-homocysteine + H(+). The catalysed reaction is a 2'-deoxycytidine in DNA + S-adenosyl-L-methionine = a 5-methyl-2'-deoxycytidine in DNA + S-adenosyl-L-homocysteine + H(+). Functionally, specifically methylates cytosine 38 in the anticodon loop of tRNA(Asp). Also has DNA (cytosine-5)-methyltransferase activity. Shows affinity for both tRNA(Asp) and DNA substrates. The sequence is that of tRNA (cytosine(38)-C(5))-methyltransferase from Spodoptera frugiperda (Fall armyworm).